A 314-amino-acid chain; its full sequence is Synaptophysin (314 aa).

Residues 1–25 lie on the Cytoplasmic side of the membrane; that stretch reads MLLLADMDVVNQLVAGGQFRVVKEP. The 208-residue stretch at 21 to 228 folds into the MARVEL domain; sequence VVKEPLGFVK…NLWFVFKETG (208 aa). Residues 26 to 49 traverse the membrane as a helical segment; that stretch reads LGFVKVLQWVFAIFAFATCGSYTG. Topologically, residues 50-107 are vesicular; sequence ELRLSVECANKTESALNIEVEFEYPFRLHQVYFDAPSCVKGGTTKIFLVGDYSSSAEF. Residue N59 is glycosylated (N-linked (GlcNAc...) asparagine). Y81 carries the phosphotyrosine modification. The chain crosses the membrane as a helical span at residues 108–131; sequence FVTVAVFAFLYSMGALATYIFLQN. At 132–138 the chain is on the cytoplasmic side; it reads KYRENNK. Residues 139–162 traverse the membrane as a helical segment; the sequence is GPMMDFLATAVFAFMWLVSSSAWA. The Vesicular segment spans residues 163-200; that stretch reads KGLSDVKMATDPENIIKEMPMCRQTGNTCKELRDPVTS. A helical membrane pass occupies residues 201-224; the sequence is GLNTSVVFGFLNLVLWVGNLWFVF. The Cytoplasmic segment spans residues 225-314; sequence KETGWAAPFM…GAPTSFSNQM (90 aa). T227 is modified (phosphothreonine). Positions 239-314 are disordered; it reads GAPEKQPAPG…GAPTSFSNQM (76 aa). Positions 254–264 are enriched in gly residues; the sequence is AGYGQGPGGYG. Residues 255–305 are repeats, Gly-rich; the sequence is GYGQGPGGYGPQDSYGPQGGYQPDYGQPASGGGGGYGPQGDYGQQGYGQQG. Over residues 265–282 the composition is skewed to low complexity; it reads PQDSYGPQGGYQPDYGQP. 2 positions are modified to phosphotyrosine: Y279 and Y296. A compositionally biased stretch (gly residues) spans 283–303; the sequence is ASGGGGGYGPQGDYGQQGYGQ.

This sequence belongs to the synaptophysin/synaptobrevin family. In terms of assembly, homohexamer or homotetramer. Interacts with SRCIN1. Interacts with VAMP2; the interaction is inhibited by interaction of VAPM2 with SEPT8. Ubiquitinated; mediated by SIAH1 or SIAH2 and leading to its subsequent proteasomal degradation. Post-translationally, phosphorylated by SRC.

The protein localises to the cytoplasmic vesicle. It localises to the secretory vesicle. It is found in the synaptic vesicle membrane. The protein resides in the synapse. Its subcellular location is the synaptosome. Its function is as follows. Possibly involved in structural functions as organizing other membrane components or in targeting the vesicles to the plasma membrane. Involved in the regulation of short-term and long-term synaptic plasticity. This Mus musculus (Mouse) protein is Synaptophysin (Syp).